The sequence spans 83 residues: Short neurotoxin 1 (83 aa).

A signal peptide spans 1 to 21; that stretch reads MKTLLLTLVVVTIVCLDLGYT. 4 disulfides stabilise this stretch: C24–C45, C38–C62, C64–C75, and C76–C81.

This sequence belongs to the three-finger toxin family. Short-chain subfamily. Type I alpha-neurotoxin sub-subfamily. As to expression, expressed by the venom gland.

The protein resides in the secreted. In terms of biological role, binds to muscle nicotinic acetylcholine receptor (nAChR) and inhibit acetylcholine from binding to the receptor, thereby impairing neuromuscular transmission. In Oxyuranus scutellatus scutellatus (Australian taipan), this protein is Short neurotoxin 1.